A 462-amino-acid polypeptide reads, in one-letter code: L-seryl-tRNA(Sec) selenium transferase (462 aa).

At K293 the chain carries N6-(pyridoxal phosphate)lysine.

The protein belongs to the SelA family. Pyridoxal 5'-phosphate serves as cofactor.

The protein resides in the cytoplasm. The catalysed reaction is L-seryl-tRNA(Sec) + selenophosphate + H(+) = L-selenocysteinyl-tRNA(Sec) + phosphate. Its pathway is aminoacyl-tRNA biosynthesis; selenocysteinyl-tRNA(Sec) biosynthesis; selenocysteinyl-tRNA(Sec) from L-seryl-tRNA(Sec) (bacterial route): step 1/1. Functionally, converts seryl-tRNA(Sec) to selenocysteinyl-tRNA(Sec) required for selenoprotein biosynthesis. This is L-seryl-tRNA(Sec) selenium transferase from Clostridium botulinum (strain 657 / Type Ba4).